The chain runs to 350 residues: MAGVQTLGRARGSTWTWRPVARDVLLARAFHSCTELEGRFYLVGGLLEGGARVPSNDTVIFDPAVGQAVRLVARGSPLRSHHDAALVGGRWLCVVGGWDGSRRLSTVAALDTEREVWEAWAANPGNCPPAGLSSHTCTRLSDGELRVSGREGGTHTQRRYGSIYTLKLDHRTRTYCYKEEGCHTTSRSGHCAALLPTAGPHPGHQLLLFGGCNSVGPEVAGQWSPGKIKEEQPVAPHLREQLARLVSSGQGLQQGPQSLRHHSCSVVGPFAVLFGGETLTRARDTICNDLYIYDTRKSPPLWFHFPSTDRGLKRVGHRTCLWNDQLYLVGGFGEDGRTASPQVCILEFFI.

Kelch repeat units follow at residues arginine 39 to glycine 89, tryptophan 91 to cysteine 137, and glutamine 325 to isoleucine 350.

As to quaternary structure, interacts with CCNA1.

The polypeptide is Kelch domain-containing protein 9 (Klhdc9) (Mus musculus (Mouse)).